The chain runs to 146 residues: Large ribosomal subunit protein uL11 (146 aa).

The protein belongs to the universal ribosomal protein uL11 family. Part of the ribosomal stalk of the 50S ribosomal subunit. Interacts with L10 and the large rRNA to form the base of the stalk. L10 forms an elongated spine to which L12 dimers bind in a sequential fashion forming a multimeric L10(L12)X complex. One or more lysine residues are methylated.

Forms part of the ribosomal stalk which helps the ribosome interact with GTP-bound translation factors. The sequence is that of Large ribosomal subunit protein uL11 from Corynebacterium kroppenstedtii (strain DSM 44385 / JCM 11950 / CIP 105744 / CCUG 35717).